A 224-amino-acid polypeptide reads, in one-letter code: Cytidylate kinase (224 aa).

11 to 19 provides a ligand contact to ATP; sequence GPAAAGKST.

This sequence belongs to the cytidylate kinase family. Type 1 subfamily.

The protein localises to the cytoplasm. It carries out the reaction CMP + ATP = CDP + ADP. The enzyme catalyses dCMP + ATP = dCDP + ADP. The protein is Cytidylate kinase of Listeria monocytogenes serotype 4a (strain HCC23).